The primary structure comprises 503 residues: Dihydropyrimidinase (503 aa).

Residues His66, His68, and Lys158 each coordinate Zn(2+). Lys158 carries the post-translational modification N6-carboxylysine. Tyr163 lines the substrate pocket. Zn(2+) is bound by residues His191, His247, and Asp325. Asn346 contacts substrate.

It belongs to the metallo-dependent hydrolases superfamily. Hydantoinase/dihydropyrimidinase family. In terms of assembly, homotetramer. It depends on Zn(2+) as a cofactor. In terms of processing, carboxylation allows a single lysine to coordinate two zinc ions.

It carries out the reaction 5,6-dihydrouracil + H2O = 3-(carbamoylamino)propanoate + H(+). In terms of biological role, catalyzes the second step of the reductive pyrimidine degradation, the reversible hydrolytic ring opening of dihydropyrimidines. Can catalyze the ring opening of 5,6-dihydrouracil to N-carbamyl-alanine and of 5,6-dihydrothymine to N-carbamyl-amino isobutyrate. The polypeptide is Dihydropyrimidinase (pyd2) (Dictyostelium discoideum (Social amoeba)).